The sequence spans 466 residues: Cell division protein FtsP (466 aa).

Residues 1-28 (MGNYSRRRFLQGSLAIVAGNVLPCAAMA) constitute a signal peptide (tat-type signal).

This sequence belongs to the FtsP family. Predicted to be exported by the Tat system. The position of the signal peptide cleavage has not been experimentally proven.

The protein resides in the periplasm. Functionally, cell division protein that is required for growth during stress conditions. May be involved in protecting or stabilizing the divisomal assembly under conditions of stress. The chain is Cell division protein FtsP from Gallibacterium anatis (strain UMN179) (Pasteurella anatis).